The sequence spans 580 residues: Probable inositol transporter 3 (580 aa).

The next 12 membrane-spanning stretches (helical) occupy residues 34 to 54, 69 to 89, 104 to 124, 127 to 147, 161 to 181, 187 to 207, 289 to 309, 316 to 336, 344 to 364, 455 to 475, 493 to 513, and 524 to 544; these read GIGG…LLYI, EIIV…GGWY, VLFL…VIIL, LLVG…ISEM, GLLI…FVHT, WMLG…LTLP, FVGI…AGYA, ALAL…MMFV, LMII…AVFN, FGYL…PGMG, LAGG…SETF, and GTFL…WLLV.

The protein belongs to the major facilitator superfamily. Sugar transporter (TC 2.A.1.1) family.

Its subcellular location is the membrane. Plasma membrane inositol-proton symporter. The sequence is that of Probable inositol transporter 3 (INT3) from Arabidopsis thaliana (Mouse-ear cress).